The sequence spans 587 residues: General negative regulator of transcription subunit 4 (587 aa).

The RING-type zinc finger occupies 33–78 (CPLCIEPMDITDKNFFPCPCGYQICQFCYNNIRQNPELNGRCPACR). Positions 94–128 (EELKMERAKLARKEKERKHREKERKENEYTNRKHL) form a coiled coil. In terms of domain architecture, RRM spans 137–228 (NLVYVVGINP…YMDGRLIKAA (92 aa)). Residues 229 to 256 (YGTTKYCSSYLRGLPCPNPNCMFLHEPG) form a C3H1-type zinc finger. Residue K270 forms a Glycyl lysine isopeptide (Lys-Gly) (interchain with G-Cter in ubiquitin) linkage. T310 carries the phosphothreonine modification. S312 carries the post-translational modification Phosphoserine. T326 bears the Phosphothreonine mark. Phosphoserine is present on S360. A disordered region spans residues 370–412 (TLNDSLGHHTTPTTENTITSTTTTTNTNATSHSHGSKKKQSLA). Positions 377–402 (HHTTPTTENTITSTTTTTNTNATSHS) are enriched in low complexity.

In terms of assembly, forms a NOT protein complex that comprises NOT1, NOT2, NOT3, NOT4 and NOT5. Subunit of the 1.0 MDa CCR4-NOT core complex that contains CCR4, CAF1, NOT1, NOT2, NOT3, NOT4, NOT5, CAF40 and CAF130. In the complex interacts with NOT1. The core complex probably is part of a less characterized 1.9 MDa CCR4-NOT complex.

Its subcellular location is the cytoplasm. It localises to the nucleus. The enzyme catalyses S-ubiquitinyl-[E2 ubiquitin-conjugating enzyme]-L-cysteine + [acceptor protein]-L-lysine = [E2 ubiquitin-conjugating enzyme]-L-cysteine + N(6)-ubiquitinyl-[acceptor protein]-L-lysine.. It functions in the pathway protein modification; protein ubiquitination. Functionally, E3 ubiquitin-protein ligase component of the CCR4-NOT core complex, which in the nucleus seems to be a general transcription factor, and in the cytoplasm the major mRNA deadenylase involved in mRNA turnover. The NOT protein subcomplex negatively regulates the basal and activated transcription of many genes. Preferentially affects TC-type TATA element-dependent transcription. Could directly or indirectly inhibit component(s) of the general transcription machinery. In the cytoplasm, catalyzes monoubiquitination of RPS7/es7 in response to stalled ribosomes, initiating a HEL2-dependent response that activates the No-Go Decay (NGD) pathway. The protein is General negative regulator of transcription subunit 4 (MOT2) of Saccharomyces cerevisiae (strain ATCC 204508 / S288c) (Baker's yeast).